A 378-amino-acid polypeptide reads, in one-letter code: Probable pectin lyase A (378 aa).

The first 18 residues, 1–18 (MKYQDLLAIAGCIANAGA), serve as a signal peptide directing secretion. 2 disulfides stabilise this stretch: Cys-81–Cys-100 and Cys-90–Cys-224. A glycan (N-linked (GlcNAc...) asparagine) is linked at Asn-127. The active site involves Arg-254. A disulfide bridge connects residues Cys-321 and Cys-329.

Belongs to the polysaccharide lyase 1 family.

The protein resides in the secreted. It carries out the reaction Eliminative cleavage of (1-&gt;4)-alpha-D-galacturonan methyl ester to give oligosaccharides with 4-deoxy-6-O-methyl-alpha-D-galact-4-enuronosyl groups at their non-reducing ends.. In terms of biological role, pectinolytic enzymes consist of four classes of enzymes: pectin lyase, polygalacturonase, pectin methylesterase and rhamnogalacturonase. Among pectinolytic enzymes, pectin lyase is the most important in depolymerization of pectin, since it cleaves internal glycosidic bonds of highly methylated pectins. This Aspergillus fumigatus (strain CBS 144.89 / FGSC A1163 / CEA10) (Neosartorya fumigata) protein is Probable pectin lyase A (pelA).